The sequence spans 261 residues: Na(+)-translocating NADH-quinone reductase subunit C (261 aa).

A helical transmembrane segment spans residues 12–32; it reads LGVVVGLSLVCSIIVSTAAVG. Threonine 229 bears the FMN phosphoryl threonine mark.

As to quaternary structure, composed of six subunits; NqrA, NqrB, NqrC, NqrD, NqrE and NqrF. FMN serves as cofactor.

It localises to the cell inner membrane. It carries out the reaction a ubiquinone + n Na(+)(in) + NADH + H(+) = a ubiquinol + n Na(+)(out) + NAD(+). NQR complex catalyzes the reduction of ubiquinone-1 to ubiquinol by two successive reactions, coupled with the transport of Na(+) ions from the cytoplasm to the periplasm. NqrA to NqrE are probably involved in the second step, the conversion of ubisemiquinone to ubiquinol. The polypeptide is Na(+)-translocating NADH-quinone reductase subunit C (Vibrio campbellii (strain ATCC BAA-1116)).